Reading from the N-terminus, the 261-residue chain is 4-hydroxy-tetrahydrodipicolinate reductase (261 aa).

NAD(+) is bound by residues 11–16, 96–98, and 122–125; these read GFMGAM, GTT, and APNF. His152 (proton donor/acceptor) is an active-site residue. A (S)-2,3,4,5-tetrahydrodipicolinate-binding site is contributed by His153. The Proton donor role is filled by Lys156. 162–163 provides a ligand contact to (S)-2,3,4,5-tetrahydrodipicolinate; that stretch reads GT.

This sequence belongs to the DapB family.

Its subcellular location is the cytoplasm. The enzyme catalyses (S)-2,3,4,5-tetrahydrodipicolinate + NAD(+) + H2O = (2S,4S)-4-hydroxy-2,3,4,5-tetrahydrodipicolinate + NADH + H(+). It catalyses the reaction (S)-2,3,4,5-tetrahydrodipicolinate + NADP(+) + H2O = (2S,4S)-4-hydroxy-2,3,4,5-tetrahydrodipicolinate + NADPH + H(+). It participates in amino-acid biosynthesis; L-lysine biosynthesis via DAP pathway; (S)-tetrahydrodipicolinate from L-aspartate: step 4/4. In terms of biological role, catalyzes the conversion of 4-hydroxy-tetrahydrodipicolinate (HTPA) to tetrahydrodipicolinate. The sequence is that of 4-hydroxy-tetrahydrodipicolinate reductase from Lactobacillus helveticus (strain DPC 4571).